Reading from the N-terminus, the 611-residue chain is Dihydroxy-acid dehydratase (611 aa).

Position 81 (Asp81) interacts with Mg(2+). Cys122 contacts [2Fe-2S] cluster. Mg(2+) is bound by residues Asp123 and Lys124. At Lys124 the chain carries N6-carboxylysine. Cys195 contributes to the [2Fe-2S] cluster binding site. Residue Glu491 participates in Mg(2+) binding. Residue Ser517 is the Proton acceptor of the active site.

This sequence belongs to the IlvD/Edd family. As to quaternary structure, homodimer. Requires [2Fe-2S] cluster as cofactor. It depends on Mg(2+) as a cofactor.

It catalyses the reaction (2R)-2,3-dihydroxy-3-methylbutanoate = 3-methyl-2-oxobutanoate + H2O. It carries out the reaction (2R,3R)-2,3-dihydroxy-3-methylpentanoate = (S)-3-methyl-2-oxopentanoate + H2O. The protein operates within amino-acid biosynthesis; L-isoleucine biosynthesis; L-isoleucine from 2-oxobutanoate: step 3/4. Its pathway is amino-acid biosynthesis; L-valine biosynthesis; L-valine from pyruvate: step 3/4. Its function is as follows. Functions in the biosynthesis of branched-chain amino acids. Catalyzes the dehydration of (2R,3R)-2,3-dihydroxy-3-methylpentanoate (2,3-dihydroxy-3-methylvalerate) into 2-oxo-3-methylpentanoate (2-oxo-3-methylvalerate) and of (2R)-2,3-dihydroxy-3-methylbutanoate (2,3-dihydroxyisovalerate) into 2-oxo-3-methylbutanoate (2-oxoisovalerate), the penultimate precursor to L-isoleucine and L-valine, respectively. In Glaesserella parasuis serovar 5 (strain SH0165) (Haemophilus parasuis), this protein is Dihydroxy-acid dehydratase.